A 488-amino-acid polypeptide reads, in one-letter code: Protein nucleotidyltransferase YdiU (488 aa).

Gly-91, Gly-93, Arg-94, Lys-114, Asp-126, Gly-127, Arg-177, and Arg-184 together coordinate ATP. Asp-253 (proton acceptor) is an active-site residue. Mg(2+)-binding residues include Asn-254 and Asp-263. Asp-263 lines the ATP pocket.

The protein belongs to the SELO family. Mg(2+) is required as a cofactor. Mn(2+) serves as cofactor.

The catalysed reaction is L-seryl-[protein] + ATP = 3-O-(5'-adenylyl)-L-seryl-[protein] + diphosphate. It carries out the reaction L-threonyl-[protein] + ATP = 3-O-(5'-adenylyl)-L-threonyl-[protein] + diphosphate. It catalyses the reaction L-tyrosyl-[protein] + ATP = O-(5'-adenylyl)-L-tyrosyl-[protein] + diphosphate. The enzyme catalyses L-histidyl-[protein] + UTP = N(tele)-(5'-uridylyl)-L-histidyl-[protein] + diphosphate. The catalysed reaction is L-seryl-[protein] + UTP = O-(5'-uridylyl)-L-seryl-[protein] + diphosphate. It carries out the reaction L-tyrosyl-[protein] + UTP = O-(5'-uridylyl)-L-tyrosyl-[protein] + diphosphate. In terms of biological role, nucleotidyltransferase involved in the post-translational modification of proteins. It can catalyze the addition of adenosine monophosphate (AMP) or uridine monophosphate (UMP) to a protein, resulting in modifications known as AMPylation and UMPylation. This chain is Protein nucleotidyltransferase YdiU, found in Bacillus cereus (strain ZK / E33L).